Here is a 478-residue protein sequence, read N- to C-terminus: MNLTLPMKKQKFLLIISLLILLSLLHQDYHIEAQNSDKVVNLPEQPLNPKISHFSGYVNVNQENTRSLFFWFFEALSESPSTRPLVLWLNGGPGCSSIGYGAASELGPFRVVENGTSLSFNQYSWVQEANMLFLESPVGVGFSYTNSSSDLENLNDAFVAEDAYNFMVAWFARYPQYKSRDFFIAGESYAGHYSPQLAELIYDRNKVQPKDSFINLKGFIVGNPLTDDEYDNKGILEYAWSHAVISDHLYDSAKHNCDFKSSNWSEPCNVAMNTVFTKYKEIDIYNIYAPKCISNSSSGASYLGFGVNDKSPAVKDWFKRVRWFEGYDPCYSNYAEEYFNRVDVRLSLHATTRNVARWKVCNDSILQTYHFTVSSMLPTYSKLIKAGLKIWVYSGDADGRVPVIGSRYCVEALGISVKSEWRSWFHNHQVGGRITEYEGGLTFVTVRGAGHLVPLNKPEEALALFRSFLNGQELPSSP.

Residues 1–33 (MNLTLPMKKQKFLLIISLLILLSLLHQDYHIEA) form the signal peptide. 3 cysteine pairs are disulfide-bonded: cysteine 95–cysteine 361, cysteine 257–cysteine 268, and cysteine 292–cysteine 330. N-linked (GlcNAc...) asparagine glycans are attached at residues asparagine 114 and asparagine 146. Serine 188 is a catalytic residue. N-linked (GlcNAc...) asparagine glycans are attached at residues asparagine 263, asparagine 295, and asparagine 362. Active-site residues include aspartate 398 and histidine 451.

Belongs to the peptidase S10 family. Expressed in senescent leaves and flowers.

It localises to the secreted. Functionally, probable carboxypeptidase. The protein is Serine carboxypeptidase-like 33 (SCPL33) of Arabidopsis thaliana (Mouse-ear cress).